We begin with the raw amino-acid sequence, 508 residues long: Histidine--tRNA ligase, cytoplasmic (508 aa).

The WHEP-TRS domain maps to 3–59 (SPALEELVLNSRHRLVRGLKQQKASADQIEEEVAKLLKLKAQLGHDESKQKFVLKTP). Phosphoserine is present on Ser66. Residues 130-132 (DLT), Arg157, Asp177, Arg326, and 330-331 (YY) contribute to the L-histidine site.

The protein belongs to the class-II aminoacyl-tRNA synthetase family. As to quaternary structure, homodimer.

The protein localises to the cytoplasm. The catalysed reaction is tRNA(His) + L-histidine + ATP = L-histidyl-tRNA(His) + AMP + diphosphate + H(+). Functionally, catalyzes the ATP-dependent ligation of histidine to the 3'-end of its cognate tRNA, via the formation of an aminoacyl-adenylate intermediate (His-AMP). Plays a role in axon guidance. The chain is Histidine--tRNA ligase, cytoplasmic (HARS1) from Mesocricetus auratus (Golden hamster).